We begin with the raw amino-acid sequence, 507 residues long: ATP synthase subunit alpha, chloroplastic (507 aa).

170-177 (GDRQTGKT) contributes to the ATP binding site.

This sequence belongs to the ATPase alpha/beta chains family. F-type ATPases have 2 components, CF(1) - the catalytic core - and CF(0) - the membrane proton channel. CF(1) has five subunits: alpha(3), beta(3), gamma(1), delta(1), epsilon(1). CF(0) has four main subunits: a, b, b' and c.

It localises to the plastid. The protein localises to the chloroplast thylakoid membrane. The catalysed reaction is ATP + H2O + 4 H(+)(in) = ADP + phosphate + 5 H(+)(out). In terms of biological role, produces ATP from ADP in the presence of a proton gradient across the membrane. The alpha chain is a regulatory subunit. This is ATP synthase subunit alpha, chloroplastic from Liriodendron tulipifera (Tuliptree).